The primary structure comprises 634 residues: Factor of DNA methylation 5 (634 aa).

A coiled-coil region spans residues 254–469; it reads IVVDDLANKI…EDTNSALMVK (216 aa).

Acts in association with FDM3 and FDM4 for RNA-directed DNA methylation (RdDM). The protein is Factor of DNA methylation 5 of Arabidopsis thaliana (Mouse-ear cress).